The following is a 125-amino-acid chain: Ribonuclease VapC19 (125 aa).

The PINc domain occupies Leu3–Gln122. Residues Asp5 and Asp93 each contribute to the Mg(2+) site.

The protein belongs to the PINc/VapC protein family. The cofactor is Mg(2+).

Functionally, toxic component of a type II toxin-antitoxin (TA) system. An RNase. Its toxic effect is neutralized by coexpression with cognate antitoxin VapB19. This chain is Ribonuclease VapC19, found in Mycobacterium tuberculosis (strain CDC 1551 / Oshkosh).